We begin with the raw amino-acid sequence, 347 residues long: Cell division protein FtsQ (347 aa).

The segment at 1–55 (MARNGNPQFPDERSTATRAKATEPEELDDRFSDLEPEEDSPFLRSQKRVPVRRGP) is disordered. Topologically, residues 1 to 66 (MARNGNPQFP…PSKKAANRVK (66 aa)) are cytoplasmic. Residues 10–33 (PDERSTATRAKATEPEELDDRFSD) are compositionally biased toward basic and acidic residues. A helical membrane pass occupies residues 67–87 (IALIVLGVLVVIGGVWMALSA). At 88–347 (YGEHSWRFRL…PTAHTSGRRH (260 aa)) the chain is on the periplasmic side. One can recognise a POTRA domain in the interval 98–166 (ESSDSIEVGG…DRIRVQVTER (69 aa)). The disordered stretch occupies residues 308–347 (DSHPSAAKPTAPAVAPAVEKPAVAKPAVAKPTAHTSGRRH). Residues 313 to 340 (AAKPTAPAVAPAVEKPAVAKPAVAKPTA) show a composition bias toward low complexity.

It belongs to the FtsQ/DivIB family. FtsQ subfamily.

The protein resides in the cell inner membrane. Functionally, essential cell division protein. The protein is Cell division protein FtsQ of Koribacter versatilis (strain Ellin345).